The chain runs to 388 residues: Gastricsin (388 aa).

The signal sequence occupies residues 1 to 16 (MKWLLVALVCLHLLEA). Positions 17 to 59 (AVIKVPLRKFKSIRETLKEKGLLKEFLNTHKYDPALKYRFGDF) are cleaved as a propeptide — activation peptide. One can recognise a Peptidase A1 domain in the interval 73-385 (YFGEISIGTP…DMANNRVGFA (313 aa)). The active site involves Asp-91. 2 disulfides stabilise this stretch: Cys-104–Cys-109 and Cys-267–Cys-271. Residue Asp-276 is part of the active site. Cysteines 310 and 343 form a disulfide.

It belongs to the peptidase A1 family.

The protein resides in the secreted. The catalysed reaction is More restricted specificity than pepsin A, but shows preferential cleavage at Tyr-|-Xaa bonds. High activity on hemoglobin.. Functionally, hydrolyzes a variety of proteins. The polypeptide is Gastricsin (PGC) (Oryctolagus cuniculus (Rabbit)).